A 570-amino-acid polypeptide reads, in one-letter code: Glycine--tRNA ligase (570 aa).

The substrate site is built by arginine 99 and glutamate 165. ATP is bound by residues arginine 197 to glutamate 199, leucine 207 to phenylalanine 212, glutamate 324 to cysteine 325, and glycine 443 to arginine 446. Position 212-216 (phenylalanine 212–glutamate 216) interacts with substrate. Residue glutamate 439 to glycine 443 coordinates substrate.

This sequence belongs to the class-II aminoacyl-tRNA synthetase family.

Its subcellular location is the cytoplasm. It catalyses the reaction tRNA(Gly) + glycine + ATP = glycyl-tRNA(Gly) + AMP + diphosphate. Its function is as follows. Catalyzes the attachment of glycine to tRNA(Gly). The polypeptide is Glycine--tRNA ligase (Thermococcus sibiricus (strain DSM 12597 / MM 739)).